A 643-amino-acid chain; its full sequence is 1-deoxy-D-xylulose-5-phosphate synthase (643 aa).

Residues histidine 78 and alanine 119 to serine 121 each bind thiamine diphosphate. Aspartate 150 contributes to the Mg(2+) binding site. Thiamine diphosphate is bound by residues glycine 151–serine 152, asparagine 179, tyrosine 288, and glutamate 370. Asparagine 179 serves as a coordination point for Mg(2+).

This sequence belongs to the transketolase family. DXPS subfamily. In terms of assembly, homodimer. Mg(2+) serves as cofactor. It depends on thiamine diphosphate as a cofactor.

It carries out the reaction D-glyceraldehyde 3-phosphate + pyruvate + H(+) = 1-deoxy-D-xylulose 5-phosphate + CO2. The protein operates within metabolic intermediate biosynthesis; 1-deoxy-D-xylulose 5-phosphate biosynthesis; 1-deoxy-D-xylulose 5-phosphate from D-glyceraldehyde 3-phosphate and pyruvate: step 1/1. In terms of biological role, catalyzes the acyloin condensation reaction between C atoms 2 and 3 of pyruvate and glyceraldehyde 3-phosphate to yield 1-deoxy-D-xylulose-5-phosphate (DXP). This chain is 1-deoxy-D-xylulose-5-phosphate synthase, found in Brucella canis (strain ATCC 23365 / NCTC 10854 / RM-666).